Reading from the N-terminus, the 494-residue chain is Glutamyl-tRNA(Gln) amidotransferase subunit A (494 aa).

Active-site charge relay system residues include Lys79 and Ser159. The active-site Acyl-ester intermediate is Ser183.

The protein belongs to the amidase family. GatA subfamily. Heterotrimer of A, B and C subunits.

The catalysed reaction is L-glutamyl-tRNA(Gln) + L-glutamine + ATP + H2O = L-glutaminyl-tRNA(Gln) + L-glutamate + ADP + phosphate + H(+). Functionally, allows the formation of correctly charged Gln-tRNA(Gln) through the transamidation of misacylated Glu-tRNA(Gln) in organisms which lack glutaminyl-tRNA synthetase. The reaction takes place in the presence of glutamine and ATP through an activated gamma-phospho-Glu-tRNA(Gln). This chain is Glutamyl-tRNA(Gln) amidotransferase subunit A, found in Bartonella tribocorum (strain CIP 105476 / IBS 506).